The primary structure comprises 396 residues: MKLLTLKKAHAAKIKKGYPLIEKEALAGSAGHMKEGDLVDIVSESGGEFLARGYYGLQNKGVGWTLTRNKHEQIDQAFFLSKLTKAAQARAKLFEAQDTTAFRLFNGEGDGVGGVTIDYYDGYLLIQWYSKGIYTFKDMLISALDEMDLDYKAIYEKKRFDTAGQYVEDDDFVKGRRGEFPIIIQENGIQYAVDLNEGAMTGIFLDQRHVRKAIRDRYAKGKTVLNTFSYTGAFSVAAALGGAEKTTSVDVANRSLAKTIEQFSVNKLDYEAHDIKVMDVFNYFSYAAKKDLRFDLIILDPPSFARTKKRTFSAAKDYKNLLKETIAITADKGVIVASTNSSAFGMKKFKGFIDAAFKETNERYTIIEEFTLPEDFKTISAFPEGNYLKVVLLQKK.

The 79-residue stretch at 1-79 (MKLLTLKKAH…KHEQIDQAFF (79 aa)) folds into the PUA domain.

The protein belongs to the methyltransferase superfamily. RlmI family.

Its subcellular location is the cytoplasm. This chain is Putative ribosomal RNA large subunit methyltransferase YwbD (ywbD), found in Bacillus subtilis (strain 168).